The chain runs to 336 residues: uncharacterized protein (336 aa).

This sequence to bacterial alkanal monooxygenase alpha and beta chains.

This is an uncharacterized protein from Bacillus subtilis (strain 168).